Here is a 141-residue protein sequence, read N- to C-terminus: Deoxyuridine 5'-triphosphate nucleotidohydrolase (141 aa).

Belongs to the dUTPase family. The cofactor is Mg(2+).

The enzyme catalyses dUTP + H2O = dUMP + diphosphate + H(+). It participates in pyrimidine metabolism; dUMP biosynthesis; dUMP from dCTP (dUTP route): step 2/2. Its function is as follows. This enzyme is involved in nucleotide metabolism: it produces dUMP, the immediate precursor of thymidine nucleotides and it decreases the intracellular concentration of dUTP so that uracil cannot be incorporated into DNA. The sequence is that of Deoxyuridine 5'-triphosphate nucleotidohydrolase from Chlorella (PBCV-1).